We begin with the raw amino-acid sequence, 103 residues long: Small ribosomal subunit protein uS10 (103 aa).

This sequence belongs to the universal ribosomal protein uS10 family. In terms of assembly, part of the 30S ribosomal subunit.

Its function is as follows. Involved in the binding of tRNA to the ribosomes. The chain is Small ribosomal subunit protein uS10 from Neisseria gonorrhoeae (strain ATCC 700825 / FA 1090).